The primary structure comprises 203 residues: FMN-dependent NADH:quinone oxidoreductase 5 (203 aa).

Residues serine 9, 15–17, 95–98, and 139–142 contribute to the FMN site; these read SAS, MYNF, and TSGG.

It belongs to the azoreductase type 1 family. Homodimer. The cofactor is FMN.

It carries out the reaction 2 a quinone + NADH + H(+) = 2 a 1,4-benzosemiquinone + NAD(+). The enzyme catalyses N,N-dimethyl-1,4-phenylenediamine + anthranilate + 2 NAD(+) = 2-(4-dimethylaminophenyl)diazenylbenzoate + 2 NADH + 2 H(+). Functionally, quinone reductase that provides resistance to thiol-specific stress caused by electrophilic quinones. In terms of biological role, also exhibits azoreductase activity. Catalyzes the reductive cleavage of the azo bond in aromatic azo compounds to the corresponding amines. This chain is FMN-dependent NADH:quinone oxidoreductase 5, found in Pseudomonas fluorescens (strain ATCC BAA-477 / NRRL B-23932 / Pf-5).